The following is a 441-amino-acid chain: Enolase (441 aa).

A (2R)-2-phosphoglycerate-binding site is contributed by Gln164. The active-site Proton donor is Glu206. 3 residues coordinate Mg(2+): Asp243, Glu289, and Asp316. Positions 341, 370, 371, and 392 each coordinate (2R)-2-phosphoglycerate. Lys341 (proton acceptor) is an active-site residue.

This sequence belongs to the enolase family. Mg(2+) serves as cofactor.

The protein localises to the cytoplasm. The protein resides in the secreted. It is found in the cell surface. The enzyme catalyses (2R)-2-phosphoglycerate = phosphoenolpyruvate + H2O. It participates in carbohydrate degradation; glycolysis; pyruvate from D-glyceraldehyde 3-phosphate: step 4/5. Catalyzes the reversible conversion of 2-phosphoglycerate (2-PG) into phosphoenolpyruvate (PEP). It is essential for the degradation of carbohydrates via glycolysis. This Leuconostoc mesenteroides subsp. mesenteroides (strain ATCC 8293 / DSM 20343 / BCRC 11652 / CCM 1803 / JCM 6124 / NCDO 523 / NBRC 100496 / NCIMB 8023 / NCTC 12954 / NRRL B-1118 / 37Y) protein is Enolase.